The chain runs to 749 residues: Chaperone protein DnaK 1 (749 aa).

A Phosphothreonine; by autocatalysis modification is found at Thr-198. 3 stretches are compositionally biased toward basic and acidic residues: residues 643–653, 661–694, and 711–724; these read RWDADPWDRSR, YDDR…RDRN, and PTWE…RDRS. The interval 643–749 is disordered; it reads RWDADPWDRS…GWDDDDDEWF (107 aa). Residues 740–749 are compositionally biased toward acidic residues; it reads GWDDDDDEWF.

This sequence belongs to the heat shock protein 70 family.

Its function is as follows. Acts as a chaperone. This chain is Chaperone protein DnaK 1, found in Synechococcus sp. (strain ATCC 27144 / PCC 6301 / SAUG 1402/1) (Anacystis nidulans).